Reading from the N-terminus, the 577-residue chain is Moesin (577 aa).

In terms of domain architecture, FERM spans 2-295; it reads PKTISVRVTT…GNHELYMRRR (294 aa). A Phosphoserine modification is found at S74. The residue at position 79 (K79) is an N6-acetyllysine. An N6-succinyllysine modification is found at K83. The short motif at 115-120 is the [IL]-x-C-x-x-[DE] motif element; it reads IYCPPE. Y116 bears the Phosphotyrosine mark. C117 bears the S-nitrosocysteine mark. An N6-acetyllysine mark is found at K139 and K165. 3 disordered regions span residues 322 to 342, 358 to 453, and 468 to 549; these read LLENEKKKRELAEKEKEKIER, TKKA…QMVQ, and STPH…AENM. A compositionally biased stretch (basic and acidic residues) spans 358 to 401; the sequence is TKKAQQELEEQTRRALELEQERKRAQSEAEKLAKERQEAEEAKE. Phosphoserine is present on S407. 2 stretches are compositionally biased toward basic and acidic residues: residues 438 to 447 and 492 to 519; these read KESEAEECHQ and AELRADAMAKDRSEEERTTEAEKNERVQ. S527 bears the Phosphoserine mark. Positions 531 to 549 are enriched in basic and acidic residues; that stretch reads NARDESKKTTNDMIHAENM. Residue T558 is modified to Phosphothreonine; by ROCK2 and STK10.

In terms of assembly, in resting T-cells, part of a PAG1-NHERF1-MSN complex which is disrupted upon TCR activation. Interacts with NHERF1. Interacts with PPP1R16B. Interacts with PDZD8. Interacts with SELPLG and SYK; these interactions mediate the activation of SYK by SELPLG. Interacts with PDPN (via cytoplasmic domain); this interaction activates RHOA and promotes epithelial-mesenchymal transition. Interacts with SPN/CD43 cytoplasmic tail. Interacts with CD44. Interacts with ICAM2. Interacts with ICAM3 (via C-terminus). Interacts with PDZD8. Interacts with F-actin. Interacts with CD46. Interacts with PTPN6. Post-translationally, phosphorylation on Thr-558 is crucial for the formation of microvilli-like structures. Phosphorylation by ROCK2 suppresses the head-to-tail association of the N-terminal and C-terminal halves resulting in an opened conformation which is capable of actin and membrane-binding. Phosphorylation on Thr-558 by STK10 negatively regulates lymphocyte migration and polarization. S-nitrosylation of Cys-117 is induced by interferon-gamma and oxidatively-modified low-densitity lipoprotein (LDL(ox)) implicating the iNOS-S100A8/9 transnitrosylase complex.

It is found in the cell membrane. Its subcellular location is the cytoplasm. The protein localises to the cytoskeleton. The protein resides in the apical cell membrane. It localises to the cell projection. It is found in the microvillus membrane. Its subcellular location is the microvillus. Its activity is regulated as follows. A head-to-tail association, of the N-terminal and C-terminal halves results in a closed conformation (inactive form) which is incapable of actin or membrane-binding. Its function is as follows. Ezrin-radixin-moesin (ERM) family protein that connects the actin cytoskeleton to the plasma membrane and thereby regulates the structure and function of specific domains of the cell cortex. Tethers actin filaments by oscillating between a resting and an activated state providing transient interactions between moesin and the actin cytoskeleton. Once phosphorylated on its C-terminal threonine, moesin is activated leading to interaction with F-actin and cytoskeletal rearrangement. These rearrangements regulate many cellular processes, including cell shape determination, membrane transport, and signal transduction. The role of moesin is particularly important in immunity acting on both T and B-cells homeostasis and self-tolerance, regulating lymphocyte egress from lymphoid organs. Modulates phagolysosomal biogenesis in macrophages. Participates also in immunologic synapse formation. This is Moesin from Rattus norvegicus (Rat).